Reading from the N-terminus, the 131-residue chain is MANLRKLGRRTDHRTAMLRNLVQSLFENGKIETTVTRAKEARREAEKMITLGKKGDLSARREALKYIYKKDVVYTLFEEIAPVYADRQGGYTRILKLGPRRGDGTEMCILELVDYTKKESSEEKETVKADK.

It belongs to the bacterial ribosomal protein bL17 family. Part of the 50S ribosomal subunit. Contacts protein L32.

The chain is Large ribosomal subunit protein bL17 from Finegoldia magna (strain ATCC 29328 / DSM 20472 / WAL 2508) (Peptostreptococcus magnus).